A 316-amino-acid chain; its full sequence is MTGWRIIFMGTPEFACPTLQTLLDRTENVVAVFTQPDRPKGRGQKLQPPPVKELALRHGIPVHQPPKVRTPEVIEQIRALQPDLIVVIAFGQILPKALLEIPPQGCVNVHASLLPRYRGAAPLNWCIVNGETETGVTTMLMDVGLDTGPMLLKKTTPIAPDEDIQSLHDRMSQLGAELLGETLDGLKTGRIVPEAQDDSQSCYAPLLKKEHGLIDWQKPAVTIHNQIRGLSAWPGAVTSLGGAPLKLYRSSIGQGAGTPGTIIATGKNGIEVACGHGSLIIHELQAAGSKKMDAASFLAGHPLALGTLLMPHEVTA.

A (6S)-5,6,7,8-tetrahydrofolate-binding site is contributed by 112 to 115; that stretch reads SLLP.

The protein belongs to the Fmt family.

It catalyses the reaction L-methionyl-tRNA(fMet) + (6R)-10-formyltetrahydrofolate = N-formyl-L-methionyl-tRNA(fMet) + (6S)-5,6,7,8-tetrahydrofolate + H(+). Attaches a formyl group to the free amino group of methionyl-tRNA(fMet). The formyl group appears to play a dual role in the initiator identity of N-formylmethionyl-tRNA by promoting its recognition by IF2 and preventing the misappropriation of this tRNA by the elongation apparatus. The chain is Methionyl-tRNA formyltransferase from Trichlorobacter lovleyi (strain ATCC BAA-1151 / DSM 17278 / SZ) (Geobacter lovleyi).